The sequence spans 34 residues: U4-theraphotoxin-Hs1a (34 aa).

3 cysteine pairs are disulfide-bonded: cysteine 3-cysteine 17, cysteine 10-cysteine 22, and cysteine 16-cysteine 33.

This sequence belongs to the neurotoxin 14 (magi-1) family. 05 (ICK-7) subfamily. As to expression, expressed by the venom gland.

It localises to the secreted. Its function is as follows. Intracisternal injection paralyzes mice. The sequence is that of U4-theraphotoxin-Hs1a from Cyriopagopus schmidti (Chinese bird spider).